A 369-amino-acid chain; its full sequence is ERCC4 domain-containing protein EP364R (369 aa).

The region spanning 3-101 is the ERCC4 domain; that stretch reads FLVADHREHH…QLYFFVEGPA (99 aa). The tract at residues 339 to 369 is disordered; sequence PLHDVSDDASSDASSPTGHQTLSKEMSLNTA. Over residues 354–369 the composition is skewed to polar residues; sequence PTGHQTLSKEMSLNTA.

Belongs to the asfivirus EP364R family.

Functionally, plays a role in the inhibition of type I interferon signaling pathway. Mechanistically, specifically interacts with 2',3'-cGAMP and cleaves it via its phosphodiesterase activity. In turn, prevents 2',3'-cGAMP interaction with host ER-resident STING1 leading to inhibition of downstream signaling pathway and type I interferon production. The sequence is that of ERCC4 domain-containing protein EP364R from African swine fever virus (isolate Tick/South Africa/Pretoriuskop Pr4/1996) (ASFV).